A 71-amino-acid chain; its full sequence is MGGRRRKKRTNDVKHVRFAAAVEVWEADDIERKGPWEQAAVDRFRFQRRIASVEELLSAVLLRQKKLLEQQ.

Important for host CHOP inhibition stretches follow at residues 16–18 (VRF) and 57–61 (LSAVL).

This sequence belongs to the asfivirus DP71L family. As to quaternary structure, interacts (via C-terminus) with host PPP1CB.

In terms of biological role, interacts with the host phosphatase PP1 catalytic subunit (PPP1CB) and recruits it to dephosphorylate EIF2S1/eIF2alpha and therefore restores the host translation that has been shut-down by the host. Also inhibits the EIF2S1/eIF2alpha-ATF4-DDIT3/CHOP pathway. This chain is Protein DP71L, found in Ornithodoros (relapsing fever ticks).